The chain runs to 432 residues: MSRRDVVLTNVTVVQLRRDPCPCPCPCPCPCPCPVIRPPPPPPKVEEPPPPKEEPPPPPPPPPPPQIEPEEPKEAPPPPPPPPPPPPPPPPPPPKPAKELTVGINGFGRIGRLVLRVCMEKGVRVVAVNDPFIDPEYMVYMFKYDSTHGRYKGTVEHKNGRLVVDNLEINVFQCKEPKEIPWSSVGNPYVVEATGVYLSIEAASGHISSGARRVIVTAPSPDAPMLVMGVNEKDYNPGSMTVVSNASCTTNCLAPLAKVIHERFGIVEGLMTTVHAYTATQKTVDGPSKKDWRGGRGAHQNIIPSSTGAAKAVGKVIPELNGKLTGMAFRVPTPNVSVVDLTCRLAQPASYTAIKEAVKAAAKGPMAGILAYTEDQVVSTDFNGDSHSSIFDAKAGIALNDNFVKLVSWYDNEYGYSHRVVDLLRYMFSREK.

The segment at 1–97 (MSRRDVVLTN…PPPPPPPKPA (97 aa)) is testis-specific N-terminal extension. Positions 40–101 (PPPPKVEEPP…PPPKPAKELT (62 aa)) are disordered. A compositionally biased stretch (basic and acidic residues) spans 44–55 (KVEEPPPPKEEP). Pro residues-rich tracts occupy residues 56–67 (PPPPPPPPPPQI) and 75–95 (APPP…PPPK). Residues 109–110 (RI), D130, K175, Y197, and T217 each bind NAD(+). Residues 247–249 (SCT), T278, 307–308 (TG), and R330 contribute to the D-glyceraldehyde 3-phosphate site. The Nucleophile role is filled by C248. Residue S350 is modified to Phosphoserine. N412 lines the NAD(+) pocket.

Belongs to the glyceraldehyde-3-phosphate dehydrogenase family. In terms of assembly, homotetramer. As to expression, expressed in both head and flagellum of epididymal sperm.

It localises to the cytoplasm. The catalysed reaction is D-glyceraldehyde 3-phosphate + phosphate + NAD(+) = (2R)-3-phospho-glyceroyl phosphate + NADH + H(+). It participates in carbohydrate degradation; glycolysis; pyruvate from D-glyceraldehyde 3-phosphate: step 1/5. In terms of biological role, may play an important role in regulating the switch between different pathways for energy production during spermiogenesis and in the spermatozoon. Required for sperm motility and male fertility. In Rattus norvegicus (Rat), this protein is Glyceraldehyde-3-phosphate dehydrogenase, testis-specific (Gapdhs).